A 244-amino-acid chain; its full sequence is Prolactin-7D1 (244 aa).

Residues 1–30 (MLPSLIQPCSSGTLLMLLMSNLFLWEKVSS) form the signal peptide. Intrachain disulfides connect Cys-99–Cys-215 and Cys-232–Cys-240.

It belongs to the somatotropin/prolactin family.

Its subcellular location is the secreted. This chain is Prolactin-7D1 (Prl7d1), found in Mus musculus (Mouse).